The chain runs to 397 residues: Multidrug efflux pump subunit AcrA (397 aa).

Residues methionine 1–glycine 24 form the signal peptide. Residue cysteine 25 is the site of N-palmitoyl cysteine attachment. Cysteine 25 is lipidated: S-diacylglycerol cysteine. The stretch at proline 98–alanine 172 forms a coiled coil. The segment at glutamate 377–serine 397 is disordered. A compositionally biased stretch (polar residues) spans threonine 379–serine 397.

The protein belongs to the membrane fusion protein (MFP) (TC 8.A.1) family. Monomeric in solution. Homotrimeric; interacts independently with AcrB and TolC as well as AcrZ. Part of the AcrA-AcrB-TolC efflux pump.

It is found in the cell inner membrane. Functionally, acrA-AcrB-AcrZ-TolC is a drug efflux protein complex with broad substrate specificity that uses the proton motive force to export substrates. This subunit may act as an adapter protein that links AcrB and TolC stably together. The sequence is that of Multidrug efflux pump subunit AcrA (acrA) from Escherichia coli O157:H7.